A 155-amino-acid polypeptide reads, in one-letter code: Transcriptional repressor NrdR (155 aa).

The segment at Cys-3 to Cys-34 is a zinc-finger region. An ATP-cone domain is found at Leu-49 to Thr-139.

This sequence belongs to the NrdR family. Zn(2+) serves as cofactor.

Negatively regulates transcription of bacterial ribonucleotide reductase nrd genes and operons by binding to NrdR-boxes. This chain is Transcriptional repressor NrdR, found in Alkaliphilus metalliredigens (strain QYMF).